Reading from the N-terminus, the 490-residue chain is Aspartyl/glutamyl-tRNA(Asn/Gln) amidotransferase subunit B (490 aa).

Belongs to the GatB/GatE family. GatB subfamily. Heterotrimer of A, B and C subunits.

The catalysed reaction is L-glutamyl-tRNA(Gln) + L-glutamine + ATP + H2O = L-glutaminyl-tRNA(Gln) + L-glutamate + ADP + phosphate + H(+). The enzyme catalyses L-aspartyl-tRNA(Asn) + L-glutamine + ATP + H2O = L-asparaginyl-tRNA(Asn) + L-glutamate + ADP + phosphate + 2 H(+). Functionally, allows the formation of correctly charged Asn-tRNA(Asn) or Gln-tRNA(Gln) through the transamidation of misacylated Asp-tRNA(Asn) or Glu-tRNA(Gln) in organisms which lack either or both of asparaginyl-tRNA or glutaminyl-tRNA synthetases. The reaction takes place in the presence of glutamine and ATP through an activated phospho-Asp-tRNA(Asn) or phospho-Glu-tRNA(Gln). In Synechococcus sp. (strain JA-2-3B'a(2-13)) (Cyanobacteria bacterium Yellowstone B-Prime), this protein is Aspartyl/glutamyl-tRNA(Asn/Gln) amidotransferase subunit B.